The primary structure comprises 305 residues: NAD kinase 2 (305 aa).

Catalysis depends on Asp78, which acts as the Proton acceptor. NAD(+) contacts are provided by residues 78 to 79 (DG), 152 to 153 (NE), Asp182, 193 to 198 (TAYSLS), and Asn251.

It belongs to the NAD kinase family. It depends on a divalent metal cation as a cofactor.

It localises to the cytoplasm. It catalyses the reaction NAD(+) + ATP = ADP + NADP(+) + H(+). Functionally, involved in the regulation of the intracellular balance of NAD and NADP, and is a key enzyme in the biosynthesis of NADP. Catalyzes specifically the phosphorylation on 2'-hydroxyl of the adenosine moiety of NAD to yield NADP. The chain is NAD kinase 2 from Synechococcus sp. (strain ATCC 27144 / PCC 6301 / SAUG 1402/1) (Anacystis nidulans).